A 207-amino-acid polypeptide reads, in one-letter code: Probable GTP-binding protein EngB (207 aa).

The EngB-type G domain maps to 23–203; it reads GAPEVCFVGR…GAHIENWISP (181 aa). Residues 31-38, 58-62, 83-86, 150-153, and 182-184 contribute to the GTP site; these read GRSNAGKS, GRTRL, DLPG, TKAD, and FSS. The Mg(2+) site is built by Ser38 and Thr60.

It belongs to the TRAFAC class TrmE-Era-EngA-EngB-Septin-like GTPase superfamily. EngB GTPase family. Mg(2+) serves as cofactor.

Functionally, necessary for normal cell division and for the maintenance of normal septation. This Bordetella bronchiseptica (strain ATCC BAA-588 / NCTC 13252 / RB50) (Alcaligenes bronchisepticus) protein is Probable GTP-binding protein EngB.